The sequence spans 991 residues: Translation initiation factor IF-2 (991 aa).

Disordered regions lie at residues 53-85, 97-175, and 312-395; these read SHGT…KART, VKRD…EAAE, and GIKG…DRGG. 2 stretches are compositionally biased toward basic and acidic residues: residues 97-113 and 125-175; these read VKRD…HDSQ and ELQR…EAAE. Over residues 323–338 the composition is skewed to low complexity; that stretch reads AAGAPAPGAAPGAAAK. Residues 339 to 349 show a composition bias toward basic and acidic residues; it reads PGEKKSVKSEK. Residues 491-658 form the tr-type G domain; sequence PRPPVVTVMG…QVLLQAEVLE (168 aa). A G1 region spans residues 500–507; it reads GHVDHGKT. A GTP-binding site is contributed by 500–507; that stretch reads GHVDHGKT. The G2 stretch occupies residues 525–529; it reads GITQH. Residues 546–549 form a G3 region; sequence DTPG. Residues 546-550 and 600-603 each bind GTP; these read DTPGH and NKID. The G4 stretch occupies residues 600-603; sequence NKID. Positions 636–638 are G5; the sequence is SAK.

The protein belongs to the TRAFAC class translation factor GTPase superfamily. Classic translation factor GTPase family. IF-2 subfamily.

It localises to the cytoplasm. In terms of biological role, one of the essential components for the initiation of protein synthesis. Protects formylmethionyl-tRNA from spontaneous hydrolysis and promotes its binding to the 30S ribosomal subunits. Also involved in the hydrolysis of GTP during the formation of the 70S ribosomal complex. The polypeptide is Translation initiation factor IF-2 (Leptothrix cholodnii (strain ATCC 51168 / LMG 8142 / SP-6) (Leptothrix discophora (strain SP-6))).